We begin with the raw amino-acid sequence, 91 residues long: Small ribosomal subunit protein bS6 (91 aa).

It belongs to the bacterial ribosomal protein bS6 family.

In terms of biological role, binds together with bS18 to 16S ribosomal RNA. This chain is Small ribosomal subunit protein bS6, found in Leptospira interrogans serogroup Icterohaemorrhagiae serovar copenhageni (strain Fiocruz L1-130).